A 306-amino-acid chain; its full sequence is Methionyl-tRNA formyltransferase (306 aa).

108–111 is a binding site for (6S)-5,6,7,8-tetrahydrofolate; that stretch reads SLLP.

It belongs to the Fmt family.

It carries out the reaction L-methionyl-tRNA(fMet) + (6R)-10-formyltetrahydrofolate = N-formyl-L-methionyl-tRNA(fMet) + (6S)-5,6,7,8-tetrahydrofolate + H(+). Attaches a formyl group to the free amino group of methionyl-tRNA(fMet). The formyl group appears to play a dual role in the initiator identity of N-formylmethionyl-tRNA by promoting its recognition by IF2 and preventing the misappropriation of this tRNA by the elongation apparatus. This is Methionyl-tRNA formyltransferase from Pseudarthrobacter chlorophenolicus (strain ATCC 700700 / DSM 12829 / CIP 107037 / JCM 12360 / KCTC 9906 / NCIMB 13794 / A6) (Arthrobacter chlorophenolicus).